The following is a 521-amino-acid chain: MGKRQHQKDKMYITCAEYTHFYGGRKPDISQTSFRRLPFDHCSLSLQPFVYPVCTPEGVVFDLLNIVPWLKKYGTNPSTGEKLDGKSLIKLNFAKNSEGQYHCPVLYSVFTDNTHIVAIRTTGNVYTYEAVEQLNIKAKNLRDLLTDEPFSRQDIITLQDPTNLDKFNVSNFFHVKNNMRIIDPDEEKAKQDPSYYLKNTNSETRETLQELYKEFKGDEILAATMRPPEKKKVDQLNAAHYSTGKVSASFTSTAMVPETTHEAAVIDEDVLRYQFVKKKGYVRLHTNKGDLNLELHCDLTPKTCENFIKLCKKQYYDGTIFHRSIRNFVIQGGDPTGTGTGGESFWGKPFKDEFRPNLSHTGRGVLSMANSGPNTNKSQFFITFRSCAYLDKKHTIFGRVVGGFDTLTAMENVESDPKTDRPKEEVLICTTTVFVDPYEEADAQIAQERKKTQHQVDPEAKVKMSQPQPGNQGPQTYRQGVGKYIHPAATKRSAEEEPSTSTATPTAKKRPSRGFGDFSSW.

Residues 35-108 (RRLPFDHCSL…GQYHCPVLYS (74 aa)) enclose the U-box domain. A coiled-coil region spans residues 197–217 (LKNTNSETRETLQELYKEFKG). K216 is covalently cross-linked (Glycyl lysine isopeptide (Lys-Gly) (interchain with G-Cter in SUMO2)). One can recognise a PPIase cyclophilin-type domain in the interval 278–433 (KKGYVRLHTN…EEVLICTTTV (156 aa)). Positions 447–462 (QERKKTQHQVDPEAKV) are enriched in basic and acidic residues. Residues 447-521 (QERKKTQHQV…SRGFGDFSSW (75 aa)) are disordered. Polar residues predominate over residues 465–478 (SQPQPGNQGPQTYR). An N6-acetyllysine modification is found at K483.

Belongs to the cyclophilin-type PPIase family. PPIL2 subfamily. As to quaternary structure, component of the minor spliceosome, which splices U12-type introns. Within this complex, interacts with PRPF8/PRP8, EFTUD2/SNU114 and PLRG1. Interacts with isoform 2 of BSG. Interacts (via the PPIase cyclophilin-type domain) with CRNKL1; they may form a trimeric complex with HSP90.

It is found in the nucleus. The catalysed reaction is S-ubiquitinyl-[E2 ubiquitin-conjugating enzyme]-L-cysteine + [acceptor protein]-L-lysine = [E2 ubiquitin-conjugating enzyme]-L-cysteine + N(6)-ubiquitinyl-[acceptor protein]-L-lysine.. The protein operates within protein modification; protein ubiquitination. Its function is as follows. Has a ubiquitin-protein ligase activity acting as an E3 ubiquitin protein ligase or as an ubiquitin-ubiquitin ligase promoting elongation of ubiquitin chains on substrates. By mediating 'Lys-48'-linked polyubiquitination of proteins could target them for proteasomal degradation. May also function as a chaperone, playing a role in transport to the cell membrane of BSG/Basigin for instance. Probable inactive PPIase with no peptidyl-prolyl cis-trans isomerase activity. As a component of the minor spliceosome, involved in the splicing of U12-type introns in pre-mRNAs. The chain is RING-type E3 ubiquitin-protein ligase PPIL2 from Mus musculus (Mouse).